A 269-amino-acid chain; its full sequence is Hydroxyethylthiazole kinase (269 aa).

Met-45 is a substrate binding site. The ATP site is built by Arg-121 and Thr-167. Residue Gly-194 participates in substrate binding.

It belongs to the Thz kinase family. Mg(2+) serves as cofactor.

It catalyses the reaction 5-(2-hydroxyethyl)-4-methylthiazole + ATP = 4-methyl-5-(2-phosphooxyethyl)-thiazole + ADP + H(+). It participates in cofactor biosynthesis; thiamine diphosphate biosynthesis; 4-methyl-5-(2-phosphoethyl)-thiazole from 5-(2-hydroxyethyl)-4-methylthiazole: step 1/1. Its function is as follows. Catalyzes the phosphorylation of the hydroxyl group of 4-methyl-5-beta-hydroxyethylthiazole (THZ). This is Hydroxyethylthiazole kinase from Bacillus mycoides (strain KBAB4) (Bacillus weihenstephanensis).